The chain runs to 335 residues: Cathepsin B (335 aa).

The signal sequence occupies residues 1–19; it reads MWQLLATLSCLLVLTSARS. The propeptide at 20–79 is activation peptide; it reads SLHFPPLSDEMVNYVNKQNTTWKAGHNFYNVDLSYVKKLCGAILGGPKLPQRDAFAADMV. 6 disulfide bridges follow: Cys-93/Cys-122, Cys-105/Cys-150, Cys-141/Cys-207, Cys-142/Cys-146, Cys-179/Cys-211, and Cys-187/Cys-198. Cys-108 is an active-site residue. Asn-192 carries an N-linked (GlcNAc...) asparagine glycan. Lys-220 bears the N6-acetyllysine mark. Catalysis depends on residues His-278 and Asn-298. A propeptide spanning residues 333–335 is cleaved from the precursor; it reads HQH.

This sequence belongs to the peptidase C1 family. In terms of assembly, dimer of a heavy chain and a light chain cross-linked by a disulfide bond. Interacts with SRPX2. Directly interacts with SHKBP1.

It localises to the lysosome. The protein resides in the melanosome. The protein localises to the secreted. It is found in the extracellular space. Its subcellular location is the apical cell membrane. The enzyme catalyses Hydrolysis of proteins with broad specificity for peptide bonds. Preferentially cleaves -Arg-Arg-|-Xaa bonds in small molecule substrates (thus differing from cathepsin L). In addition to being an endopeptidase, shows peptidyl-dipeptidase activity, liberating C-terminal dipeptides.. Functionally, thiol protease which is believed to participate in intracellular degradation and turnover of proteins. Cleaves matrix extracellular phosphoglycoprotein MEPE. Involved in the solubilization of cross-linked TG/thyroglobulin in the thyroid follicle lumen. Has also been implicated in tumor invasion and metastasis. The chain is Cathepsin B (CTSB) from Ovis aries (Sheep).